The chain runs to 125 residues: UPF0102 protein Mpop_0474 (125 aa).

It belongs to the UPF0102 family.

This is UPF0102 protein Mpop_0474 from Methylorubrum populi (strain ATCC BAA-705 / NCIMB 13946 / BJ001) (Methylobacterium populi).